A 131-amino-acid chain; its full sequence is Cytochrome c-552 (131 aa).

Positions 11, 14, 15, and 69 each coordinate heme c.

In terms of processing, binds 1 heme c group covalently per subunit.

Functionally, this monoheme basic protein appears to function as an electron donor to cytochrome oxidase in T.thermophilus. This is Cytochrome c-552 (cycA) from Thermus thermophilus.